An 89-amino-acid chain; its full sequence is Small ribosomal subunit protein uS19 (89 aa).

This sequence belongs to the universal ribosomal protein uS19 family.

Its function is as follows. Protein S19 forms a complex with S13 that binds strongly to the 16S ribosomal RNA. The chain is Small ribosomal subunit protein uS19 from Porphyromonas gingivalis (strain ATCC 33277 / DSM 20709 / CIP 103683 / JCM 12257 / NCTC 11834 / 2561).